The primary structure comprises 94 residues: Citrate lyase acyl carrier protein (94 aa).

Serine 14 is modified (O-(phosphoribosyl dephospho-coenzyme A)serine).

Belongs to the CitD family. In terms of assembly, oligomer with a subunit composition of (alpha,beta,gamma)6.

The protein localises to the cytoplasm. Covalent carrier of the coenzyme of citrate lyase. The sequence is that of Citrate lyase acyl carrier protein from Fusobacterium nucleatum subsp. nucleatum (strain ATCC 25586 / DSM 15643 / BCRC 10681 / CIP 101130 / JCM 8532 / KCTC 2640 / LMG 13131 / VPI 4355).